The primary structure comprises 271 residues: Tryptophan synthase alpha chain (271 aa).

Active-site proton acceptor residues include glutamate 49 and aspartate 60.

Belongs to the TrpA family. As to quaternary structure, tetramer of two alpha and two beta chains.

It catalyses the reaction (1S,2R)-1-C-(indol-3-yl)glycerol 3-phosphate + L-serine = D-glyceraldehyde 3-phosphate + L-tryptophan + H2O. Its pathway is amino-acid biosynthesis; L-tryptophan biosynthesis; L-tryptophan from chorismate: step 5/5. Its function is as follows. The alpha subunit is responsible for the aldol cleavage of indoleglycerol phosphate to indole and glyceraldehyde 3-phosphate. The polypeptide is Tryptophan synthase alpha chain (Nitrosococcus oceani (strain ATCC 19707 / BCRC 17464 / JCM 30415 / NCIMB 11848 / C-107)).